The sequence spans 478 residues: Odorant receptor coreceptor (478 aa).

The Cytoplasmic portion of the chain corresponds to 1–43 (MMKMKQQGLVADLLPNIRVMKTFGHFVFNYYNDNSSKYLHKVY). Residues 44–64 (CCVNLFMLLLQFGLCAVNLIV) form a helical membrane-spanning segment. Over 65 to 73 (ESADVDDLT) the chain is Extracellular. Residues 74–94 (ANTITLLFFTHSIVKICYFAI) form a helical membrane-spanning segment. Topologically, residues 95-133 (RSKYFYRTWAIWNNPNSHPLFAESNARYHAIALKKMRLL) are cytoplasmic. Residues 134 to 154 (LFLVGGTTMLAAVAWTVLTFF) traverse the membrane as a helical segment. Residues 155–190 (EHPIRKIVDPVTNETEIIELPQLLIRSFYPFDAGKG) are Extracellular-facing. Asn-167 carries an N-linked (GlcNAc...) asparagine glycan. Residues 191 to 211 (ITHVLVLVYQFYWVLFMLIDA) form a helical membrane-spanning segment. The Cytoplasmic segment spans residues 212–349 (NSLDVLFCSW…IVRLVTAVGD (138 aa)). The segment at 261–281 (SADHLRDGDNPPPPPPPQSDN) is disordered. Residues 350–370 (AYGFALLLHMLTTTITLTLLA) form a helical membrane-spanning segment. The Extracellular portion of the chain corresponds to 371-382 (YQATKVNGINVY). Residues 383-403 (AASTIGYILYTFGQVFLFCIF) traverse the membrane as a helical segment. The Cytoplasmic portion of the chain corresponds to 404–454 (GNRLIEESTSVMEAAYSCHWYDGSEEAKTFVQIVCQQCQKAMSISGAKFFT). The helical transmembrane segment at 455 to 475 (VSLDLFASVLGAVVTYFMVLV) threads the bilayer. The Extracellular segment spans residues 476–478 (QLK).

Belongs to the insect chemoreceptor superfamily. Heteromeric odorant receptor channel (TC 1.A.69) family. Orco subfamily. As to quaternary structure, heterodimer with conventional odorant receptors (ORs). As to expression, present in antennae (at protein level).

It is found in the cell membrane. In terms of biological role, odorant coreceptor which complexes with conventional odorant receptors (ORs) to form odorant-sensing units, providing sensitive and prolonged odorant signaling and calcium permeability. Obligate coreceptor of all odorant receptors. Orco is a universal and integral part of the functional odorant receptor, involved in the dendritic localization of other olfactory receptors. Can form functional ion channels in the absence of an odor-binding odorant receptor. Plays a central role in the perception of olfactory stimuli in ants and is essential for ant social organization. Required for pheromone sensing. Also required for the development and maintenance of odorant receptor neurons (ORNs) and of antennal lobe glomeruli. This chain is Odorant receptor coreceptor, found in Ooceraea biroi (Clonal raider ant).